A 638-amino-acid chain; its full sequence is Probable potassium transport system protein Kup (638 aa).

The next 12 helical transmembrane spans lie at 25–45 (LAIAAIGVVFGDIGTSPLYSL), 65–85 (VISLLFWAILLVVGVKYLLFV), 114–134 (AGALMALGIFGACMFYGDAVI), 152–172 (PHLSHLVLPITIVILIALFWI), 184–204 (FGPIMVLWFVVIAALGVYHIV), 226–246 (LLQAYVVLGSVVLVLTGAEAL), 262–282 (AYGLVMPSLVLNYFGQGALLI), 291–311 (PFFLLAPEWGLLPLVVLSTVA), 352–372 (IYVPVVNWLLLAVILCIVVGF), 382–402 (YGIAVTATMVITTVLACVVMV), 410–430 (LLVGAIIAVFLAIDLGFFGAN), and 434–454 (VAQGGWLPLGIGALLFFLLMT).

This sequence belongs to the HAK/KUP transporter (TC 2.A.72) family.

The protein localises to the cell inner membrane. The catalysed reaction is K(+)(in) + H(+)(in) = K(+)(out) + H(+)(out). Transport of potassium into the cell. Likely operates as a K(+):H(+) symporter. This chain is Probable potassium transport system protein Kup, found in Burkholderia cenocepacia (strain HI2424).